A 283-amino-acid polypeptide reads, in one-letter code: Biotin synthase (283 aa).

Residues 3–232 form the Radical SAM core domain; the sequence is KISNEIFLCS…NTRLMIAGGR (230 aa). The [4Fe-4S] cluster site is built by Cys-21, Cys-25, and Cys-28. 3 residues coordinate [2Fe-2S] cluster: Cys-65, Cys-100, and Arg-225.

The protein belongs to the radical SAM superfamily. Biotin synthase family. Homodimer. [4Fe-4S] cluster serves as cofactor. [2Fe-2S] cluster is required as a cofactor.

The catalysed reaction is (4R,5S)-dethiobiotin + (sulfur carrier)-SH + 2 reduced [2Fe-2S]-[ferredoxin] + 2 S-adenosyl-L-methionine = (sulfur carrier)-H + biotin + 2 5'-deoxyadenosine + 2 L-methionine + 2 oxidized [2Fe-2S]-[ferredoxin]. The protein operates within cofactor biosynthesis; biotin biosynthesis; biotin from 7,8-diaminononanoate: step 2/2. Its function is as follows. Catalyzes the conversion of dethiobiotin (DTB) to biotin by the insertion of a sulfur atom into dethiobiotin via a radical-based mechanism. The sequence is that of Biotin synthase from Helicobacter hepaticus (strain ATCC 51449 / 3B1).